The following is a 606-amino-acid chain: Leucine-rich repeat and immunoglobulin-like domain-containing nogo receptor-interacting protein 2 (606 aa).

Positions Met1–Gly27 are cleaved as a signal peptide. An LRRNT domain is found at Cys28–Ile57. At Cys28–Thr545 the chain is on the extracellular side. An N-linked (GlcNAc...) asparagine glycan is attached at Asn38. 12 LRR repeats span residues Glu58–Ser79, Leu82–Asn103, Asn106–Gly127, Asn130–Asp151, Asn154–Gly175, Ser178–His199, Ser202–Arg223, His226–Tyr247, Asn250–His271, Tyr274–Asp295, Arg298–Gly319, and Phe322–Ser343. The N-linked (GlcNAc...) asparagine glycan is linked to Asn130. Asn188 is a glycosylation site (N-linked (GlcNAc...) asparagine). N-linked (GlcNAc...) asparagine glycosylation is found at Asn250, Asn260, and Asn279. The N-linked (GlcNAc...) asparagine glycan is linked to Asn327. Positions Asn355–Lys409 constitute an LRRCT domain. Cys432 and Cys483 are oxidised to a cystine. N-linked (GlcNAc...) asparagine glycosylation is found at Asn491, Asn522, and Asn527. A helical membrane pass occupies residues Ala546–Trp566. Over Ser567–Ile606 the chain is Cytoplasmic.

It localises to the membrane. The polypeptide is Leucine-rich repeat and immunoglobulin-like domain-containing nogo receptor-interacting protein 2 (Lingo2) (Mus musculus (Mouse)).